Reading from the N-terminus, the 105-residue chain is Cuticle protein AMP4 (105 aa).

A disordered region spans residues 1–21; it reads DRDAQTLTDERNDQGDGNFRY. The region spanning 16-81 is the Chitin-binding type R&amp;R domain; it reads DGNFRYEFET…PSSDLLPVGP (66 aa).

As to expression, arthrodial membrane.

The protein is Cuticle protein AMP4 of Homarus americanus (American lobster).